We begin with the raw amino-acid sequence, 262 residues long: Sulfur carrier protein FdhD (262 aa).

The active-site Cysteine persulfide intermediate is Cys-107.

The protein belongs to the FdhD family.

The protein resides in the cytoplasm. Required for formate dehydrogenase (FDH) activity. Acts as a sulfur carrier protein that transfers sulfur from IscS to the molybdenum cofactor prior to its insertion into FDH. The sequence is that of Sulfur carrier protein FdhD from Bacillus pumilus (strain SAFR-032).